We begin with the raw amino-acid sequence, 626 residues long: tRNA uridine 5-carboxymethylaminomethyl modification enzyme MnmG (626 aa).

13-18 (GGGHAG) is a binding site for FAD. Position 273 to 287 (273 to 287 (GPRYCPSIEDKIHRF)) interacts with NAD(+).

It belongs to the MnmG family. In terms of assembly, homodimer. Heterotetramer of two MnmE and two MnmG subunits. The cofactor is FAD.

It is found in the cytoplasm. NAD-binding protein involved in the addition of a carboxymethylaminomethyl (cmnm) group at the wobble position (U34) of certain tRNAs, forming tRNA-cmnm(5)s(2)U34. This Acinetobacter baumannii (strain AB307-0294) protein is tRNA uridine 5-carboxymethylaminomethyl modification enzyme MnmG.